The primary structure comprises 234 residues: Interleukin-34 (234 aa).

The N-terminal stretch at 1-20 (MPWGLAWLYCLGILLDVALG) is a signal peptide. N-linked (GlcNAc...) asparagine glycosylation is present at Asn-99. Positions 215 to 234 (PRQPPTSLPRSPSSNHGPLP) are disordered. The span at 222–234 (LPRSPSSNHGPLP) shows a compositional bias: polar residues.

The protein belongs to the IL-34 family. As to quaternary structure, homodimer. Interacts with CSF1R.

It is found in the secreted. Functionally, cytokine that promotes the proliferation, survival and differentiation of monocytes and macrophages. Promotes the release of pro-inflammatory chemokines, and thereby plays an important role in innate immunity and in inflammatory processes. Plays an important role in the regulation of osteoclast proliferation and differentiation, and in the regulation of bone resorption. Signaling via CSF1R and its downstream effectors stimulates phosphorylation of MAPK1/ERK2 AND MAPK3/ERK1. This is Interleukin-34 (Il34) from Rattus norvegicus (Rat).